A 111-amino-acid polypeptide reads, in one-letter code: Cytochrome c (111 aa).

Position 1 is an N-acetylalanine (alanine 1). Residues cysteine 22, cysteine 25, and histidine 26 each coordinate heme c. An N6,N6,N6-trimethyllysine modification is found at lysine 80. Heme c is bound at residue methionine 88. Lysine 94 carries the N6,N6,N6-trimethyllysine modification.

This sequence belongs to the cytochrome c family. Post-translationally, binds 1 heme c group covalently per subunit.

It is found in the mitochondrion intermembrane space. Electron carrier protein. The oxidized form of the cytochrome c heme group can accept an electron from the heme group of the cytochrome c1 subunit of cytochrome reductase. Cytochrome c then transfers this electron to the cytochrome oxidase complex, the final protein carrier in the mitochondrial electron-transport chain. The chain is Cytochrome c from Vigna radiata var. radiata (Mung bean).